Here is a 62-residue protein sequence, read N- to C-terminus: Alpha-conotoxin ViIA (62 aa).

An N-terminal signal peptide occupies residues 1 to 18 (MGMRMMFVVFLLVVFASS). A propeptide spanning residues 19-45 (VTLDRASYGRYASPVDRASALIAQAIL) is cleaved from the precursor. Intrachain disulfides connect Cys-48/Cys-54 and Cys-49/Cys-61.

Belongs to the conotoxin A superfamily. In terms of processing, the toxin is inactive on the alpha-3-beta-2 nAChR when the disulfide bond connectivity is C1-C4 and C2-C3 (ViIA-I) (IC(50)&gt;10000 nM). As to expression, expressed by the venom duct.

The protein localises to the secreted. Functionally, alpha-conotoxins act on postsynaptic membranes, they bind to the nicotinic acetylcholine receptors (nAChR) and thus inhibit them. This toxin selectively inhibits nicotinic acetylcholine receptor (nAChR) alpha-3-beta-2 subtype (IC(50)=845.5 nM). The protein is Alpha-conotoxin ViIA of Conus virgo (Virgin cone).